The primary structure comprises 255 residues: Pre-miRNA 5'-monophosphate methyltransferase (255 aa).

S-adenosyl-L-methionine-binding positions include Arg-32, Asn-66, Asp-96, 121-122 (DI), and Met-150. The Bin3-type SAM domain maps to 41–253 (LHKLFRKPAE…SLLLFKIQRH (213 aa)).

It belongs to the methyltransferase superfamily.

It localises to the cytoplasm. It carries out the reaction a 5'-end 5'-phospho-ribonucleoside-RNA + S-adenosyl-L-methionine = a 5'-end (5'-methylphospho)-ribonucleoside-RNA + S-adenosyl-L-homocysteine. It catalyses the reaction a 5'-end 5'-phospho-ribonucleoside-RNA + 2 S-adenosyl-L-methionine = a 5'-end (5'-bismethylphospho)-ribonucleoside-RNA + 2 S-adenosyl-L-homocysteine. Its function is as follows. O-methyltransferase that specifically monomethylates 5'-monophosphate of cytoplasmic histidyl tRNA (tRNA(His)), acting as a capping enzyme by protecting tRNA(His) from cleavage by DICER1. Also able, with less efficiently, to methylate the 5' monophosphate of a subset of pre-miRNAs, acting as a negative regulator of miRNA processing. The 5' monophosphate of pre-miRNAs is recognized by DICER1 and is required for pre-miRNAs processing: methylation at this position reduces the processing of pre-miRNAs by DICER1. Was also reported to mediate dimethylation of pre-miR-145; however dimethylation cannot be reproduced by another group which observes a monomethylation of pre-miR-145. In Xenopus laevis (African clawed frog), this protein is Pre-miRNA 5'-monophosphate methyltransferase (bcdin3d).